A 714-amino-acid chain; its full sequence is Polyribonucleotide nucleotidyltransferase (714 aa).

Mg(2+) is bound by residues aspartate 488 and aspartate 494. One can recognise a KH domain in the interval 555-614; sequence PRIEVMNIPTDKIRDVIGSGGKVIREIVEKTGAKINIEDDGTVKIASSNGKEIEAAKKWI. The S1 motif domain occupies 624–692; sequence GEIYEGTVVK…ERGKVRLSMK (69 aa).

It belongs to the polyribonucleotide nucleotidyltransferase family. Requires Mg(2+) as cofactor.

The protein localises to the cytoplasm. The enzyme catalyses RNA(n+1) + phosphate = RNA(n) + a ribonucleoside 5'-diphosphate. Its function is as follows. Involved in mRNA degradation. Catalyzes the phosphorolysis of single-stranded polyribonucleotides processively in the 3'- to 5'-direction. The protein is Polyribonucleotide nucleotidyltransferase of Brucella abortus biovar 1 (strain 9-941).